Reading from the N-terminus, the 290-residue chain is O-methyltransferase agiB (290 aa).

Residue Asp-155 participates in S-adenosyl-L-methionine binding. Catalysis depends on His-194, which acts as the Proton acceptor.

It belongs to the class I-like SAM-binding methyltransferase superfamily. Cation-independent O-methyltransferase family.

The protein operates within secondary metabolite biosynthesis. Its function is as follows. O-methyltransferase; part of the gene cluster that mediates the biosynthesis of the aspergillicins A and F, 2 cryptic cyclic hexa-depsipeptides. The hexamodular NRPS agiA catalyzes the condensation of the six amino acid residues including N-Me-L-O-Me-tyrosine, L-proline 1, L-proline 2, D-isoleucine, O-acetyl-threonine, and L-isoleucine. The starting condensation domain (C1) of agiA probably loads acetyl-CoA which is condensed on the N-terminus of threonine by the first module to yield O-acetyl-threonine. The second module then loads L-isoleucine. The epimerase (E) domain on module 2 is probably involved in the formation of the D-isoleucine moiety. Modules 3 and 4 further load 2 successive L-prolines. Module 5 is then involved in the condensation of O-Me-L-tyrosine produced by the O-methyltransferase agiB and the N-methyl transferase (NMeT) domain on module 5 probably catalyzes the N-methylation to yield the N-Me-L-O-Me-tyrosine moiety. The A domain of module 5 loads preferentially O-Me-L-tyrosine, but it can also accept L-phenylalanine, which leads to the production of aspergillicin G. Module 6 then loads the last residue, L-isoleucine. The C-terminal thiolesterase (TE) domain probably cyclizes the peptide using the hydroxy group from threonine to form the cyclic depsipeptide. This is O-methyltransferase agiB from Aspergillus flavus (strain ATCC 200026 / FGSC A1120 / IAM 13836 / NRRL 3357 / JCM 12722 / SRRC 167).